Here is an 840-residue protein sequence, read N- to C-terminus: N-acetyltransferase ESCO1 (840 aa).

Positions 1–25 are enriched in basic and acidic residues; sequence MMSIQEKSKENSSKVTKKSDDKNSE. The segment at 1–188 is disordered; it reads MMSIQEKSKE…VLEVKSDSKE (188 aa). Composition is skewed to polar residues over residues 46-58, 65-74, and 81-96; these read KSQAKSSSESKIN, RMSTRSSKAA, and KSINKNTVTVRGYSQE. Basic and acidic residues predominate over residues 131–140; it reads VSRRSLRSRE. The span at 141–153 shows a compositional bias: polar residues; sequence IQGQVQAVKQSLP. Residues 161 to 170 are compositionally biased toward low complexity; sequence SSTQSKSNKT. Positions 178–188 are enriched in basic and acidic residues; it reads KVLEVKSDSKE. S200 carries the post-translational modification Phosphoserine. Disordered regions lie at residues 221–300 and 318–338; these read TQGS…KSKR and NVEVKKESSQMESVKEEKPTE. The span at 267 to 278 shows a compositional bias: polar residues; that stretch reads HTQVNTNTTLPK. Residues 319-338 are compositionally biased toward basic and acidic residues; it reads VEVKKESSQMESVKEEKPTE. K332 participates in a covalent cross-link: Glycyl lysine isopeptide (Lys-Gly) (interchain with G-Cter in SUMO2). Phosphoserine is present on S412. Disordered regions lie at residues 486 to 505 and 542 to 582; these read ANEIKPSDPPLDNQMKHSFD and TGEN…KCNS. A compositionally biased stretch (polar residues) spans 551–565; that stretch reads APQQHSILSNQTSKS. Residues 617-641 form a CCHH-type zinc finger; that stretch reads VSCNVCGMLYTASNPEDETQHLLFH. Residues 772–774, 780–785, and 812–814 contribute to the acetyl-CoA site; these read IWV, RKKIAS, and TPD.

It belongs to the acetyltransferase family. ECO subfamily. In terms of assembly, the subunit structure is controversial. Monomer. Homodimer. In terms of processing, phosphorylated during mitosis, when associated with chromosomes. As to expression, widely expressed. Expressed in heart, brain, liver, placenta, lung, kidney and pancreas. Highly expressed in muscle.

It is found in the nucleus. The protein resides in the chromosome. The enzyme catalyses L-lysyl-[protein] + acetyl-CoA = N(6)-acetyl-L-lysyl-[protein] + CoA + H(+). Acetyltransferase required for the establishment of sister chromatid cohesion. Couples the processes of cohesion and DNA replication to ensure that only sister chromatids become paired together. In contrast to the structural cohesins, the deposition and establishment factors are required only during S phase. Acts by mediating the acetylation of cohesin component SMC3. This chain is N-acetyltransferase ESCO1 (ESCO1), found in Homo sapiens (Human).